The chain runs to 548 residues: Probable malate:quinone oxidoreductase (548 aa).

The tract at residues 521 to 548 (DKPQAADSTPKPQLKPQPVQKEVADIAL) is disordered. The span at 530 to 541 (PKPQLKPQPVQK) shows a compositional bias: low complexity.

It belongs to the MQO family. The cofactor is FAD.

It catalyses the reaction (S)-malate + a quinone = a quinol + oxaloacetate. The protein operates within carbohydrate metabolism; tricarboxylic acid cycle; oxaloacetate from (S)-malate (quinone route): step 1/1. This chain is Probable malate:quinone oxidoreductase, found in Shigella boydii serotype 4 (strain Sb227).